The chain runs to 374 residues: Copper-containing nitrite reductase (374 aa).

Residues 1–31 (MFTRRAALVGAAALASAPLVIRTAGAEEAPA) constitute a signal peptide (tat-type signal). Plastocyanin-like domains lie at 93 to 189 (MTFD…IMVL) and 254 to 355 (GAVG…VLVE). Cu cation contacts are provided by H126, H131, H166, C167, H177, M182, and H338.

It belongs to the multicopper oxidase family. In terms of assembly, homotrimer. Cu(2+) serves as cofactor. The cofactor is Cu(+). Requires FAD as cofactor. Predicted to be exported by the Tat system. The position of the signal peptide cleavage has not been experimentally proven.

The protein localises to the periplasm. The enzyme catalyses nitric oxide + Fe(III)-[cytochrome c] + H2O = Fe(II)-[cytochrome c] + nitrite + 2 H(+). It functions in the pathway nitrogen metabolism; nitrate reduction (denitrification); dinitrogen from nitrate: step 2/4. The protein is Copper-containing nitrite reductase (nirK) of Cereibacter sphaeroides (strain ATCC 17025 / ATH 2.4.3) (Rhodobacter sphaeroides).